The primary structure comprises 368 residues: Peptide chain release factor 2 (368 aa).

Q250 is subject to N5-methylglutamine.

The protein belongs to the prokaryotic/mitochondrial release factor family. Post-translationally, methylated by PrmC. Methylation increases the termination efficiency of RF2.

The protein resides in the cytoplasm. Its function is as follows. Peptide chain release factor 2 directs the termination of translation in response to the peptide chain termination codons UGA and UAA. This is Peptide chain release factor 2 from Rickettsia conorii (strain ATCC VR-613 / Malish 7).